A 456-amino-acid polypeptide reads, in one-letter code: Signal transduction histidine-protein kinase ArlS (456 aa).

The next 2 membrane-spanning stretches (helical) occupy residues 13-33 (LITTLITFTTILLFCLIIIFF) and 157-177 (IVALAFGLIATIITAGVSYIF). One can recognise an HAMP domain in the interval 179 to 232 (SQITKPIVTMSNKMNQIRRDGFQNKLELTTNYEETDNLIDTFNEMMYQIEESFN). One can recognise a Histidine kinase domain in the interval 240 to 456 (DASHELRTPL…TFKISFPVLN (217 aa)). H243 is subject to Phosphohistidine; by autocatalysis.

Post-translationally, autophosphorylated.

It is found in the cell membrane. The catalysed reaction is ATP + protein L-histidine = ADP + protein N-phospho-L-histidine.. Member of the two-component regulatory system ArlS/ArlR. ArlS probably functions as a sensor protein kinase which is autophosphorylated at a histidine residue and transfers its phosphate group to ArlR. The polypeptide is Signal transduction histidine-protein kinase ArlS (arlS) (Staphylococcus epidermidis (strain ATCC 12228 / FDA PCI 1200)).